The chain runs to 313 residues: 4-hydroxy-3-methylbut-2-enyl diphosphate reductase (313 aa).

Cysteine 12 serves as a coordination point for [4Fe-4S] cluster. (2E)-4-hydroxy-3-methylbut-2-enyl diphosphate contacts are provided by histidine 41 and histidine 74. The dimethylallyl diphosphate site is built by histidine 41 and histidine 74. Histidine 41 and histidine 74 together coordinate isopentenyl diphosphate. Cysteine 96 is a binding site for [4Fe-4S] cluster. Histidine 124 is a binding site for (2E)-4-hydroxy-3-methylbut-2-enyl diphosphate. Residue histidine 124 participates in dimethylallyl diphosphate binding. Residue histidine 124 participates in isopentenyl diphosphate binding. The active-site Proton donor is glutamate 126. A (2E)-4-hydroxy-3-methylbut-2-enyl diphosphate-binding site is contributed by threonine 167. Cysteine 197 contributes to the [4Fe-4S] cluster binding site. 4 residues coordinate (2E)-4-hydroxy-3-methylbut-2-enyl diphosphate: serine 225, serine 226, asparagine 227, and serine 269. Positions 225, 226, 227, and 269 each coordinate dimethylallyl diphosphate. Serine 225, serine 226, asparagine 227, and serine 269 together coordinate isopentenyl diphosphate.

It belongs to the IspH family. [4Fe-4S] cluster serves as cofactor.

It catalyses the reaction isopentenyl diphosphate + 2 oxidized [2Fe-2S]-[ferredoxin] + H2O = (2E)-4-hydroxy-3-methylbut-2-enyl diphosphate + 2 reduced [2Fe-2S]-[ferredoxin] + 2 H(+). The catalysed reaction is dimethylallyl diphosphate + 2 oxidized [2Fe-2S]-[ferredoxin] + H2O = (2E)-4-hydroxy-3-methylbut-2-enyl diphosphate + 2 reduced [2Fe-2S]-[ferredoxin] + 2 H(+). It functions in the pathway isoprenoid biosynthesis; dimethylallyl diphosphate biosynthesis; dimethylallyl diphosphate from (2E)-4-hydroxy-3-methylbutenyl diphosphate: step 1/1. The protein operates within isoprenoid biosynthesis; isopentenyl diphosphate biosynthesis via DXP pathway; isopentenyl diphosphate from 1-deoxy-D-xylulose 5-phosphate: step 6/6. In terms of biological role, catalyzes the conversion of 1-hydroxy-2-methyl-2-(E)-butenyl 4-diphosphate (HMBPP) into a mixture of isopentenyl diphosphate (IPP) and dimethylallyl diphosphate (DMAPP). Acts in the terminal step of the DOXP/MEP pathway for isoprenoid precursor biosynthesis. This chain is 4-hydroxy-3-methylbut-2-enyl diphosphate reductase, found in Photobacterium profundum (strain SS9).